The following is a 275-amino-acid chain: MKNTAVTFKESKLRNEKLTMLTAYDYSTAKIIDEAGINGILVGDSLGMVCLGHEDTLSVTMEDMIHHTRAVTRGAKNTLVVADMPFMSYQTSVYDSVVNAGRLIKEGRAQVVKLEGGIEVCDKIEAIVKASIPVMAHIGLTPQSVNAFGGFKVQGKDKEAAKELIRAAKAVEKAGAFAVVLECVPTKLAELISKEISIPTIGIGAGAGCDGQILVYQDMLGMYSDFTPKFVKKYANLSEEMNKAFTKYIEEVKDGVFPGPEHGFKISDDVLEKLY.

Positions 44 and 83 each coordinate Mg(2+). Residues aspartate 44–serine 45, aspartate 83, and lysine 113 contribute to the 3-methyl-2-oxobutanoate site. Glutamate 115 contacts Mg(2+). The Proton acceptor role is filled by glutamate 182.

This sequence belongs to the PanB family. Homodecamer; pentamer of dimers. Requires Mg(2+) as cofactor.

The protein resides in the cytoplasm. The enzyme catalyses 3-methyl-2-oxobutanoate + (6R)-5,10-methylene-5,6,7,8-tetrahydrofolate + H2O = 2-dehydropantoate + (6S)-5,6,7,8-tetrahydrofolate. It participates in cofactor biosynthesis; (R)-pantothenate biosynthesis; (R)-pantoate from 3-methyl-2-oxobutanoate: step 1/2. Functionally, catalyzes the reversible reaction in which hydroxymethyl group from 5,10-methylenetetrahydrofolate is transferred onto alpha-ketoisovalerate to form ketopantoate. This chain is 3-methyl-2-oxobutanoate hydroxymethyltransferase, found in Enterococcus faecalis (strain ATCC 700802 / V583).